Consider the following 123-residue polypeptide: Thioredoxin domain-containing protein 17 (123 aa).

Positions 41-123 constitute a Thioredoxin domain; the sequence is SWCPDCVKAE…DLVRMMFTED (83 aa). Active-site nucleophile residues include cysteine 43 and cysteine 46. Cysteine 43 and cysteine 46 are disulfide-bonded.

This sequence belongs to the thioredoxin family.

It is found in the cytoplasm. Its function is as follows. Disulfide reductase. May participate in various redox reactions through the reversible oxidation of its active center dithiol to a disulfide and catalyze dithiol-disulfide exchange reactions. Has peroxidase activity and may contribute to the elimination of cellular hydrogen peroxide. The protein is Thioredoxin domain-containing protein 17 (txndc17) of Danio rerio (Zebrafish).